Reading from the N-terminus, the 85-residue chain is Large ribosomal subunit protein bL27 (85 aa).

Positions 1–20 are disordered; the sequence is MATKKAGGSTRNGRDSEAKR.

Belongs to the bacterial ribosomal protein bL27 family.

This Glaesserella parasuis serovar 5 (strain SH0165) (Haemophilus parasuis) protein is Large ribosomal subunit protein bL27.